A 131-amino-acid polypeptide reads, in one-letter code: Single-stranded DNA-binding protein 1 (131 aa).

The SSB domain occupies 1–103 (MYNKVIAIGR…VLCQSFQLLE (103 aa)).

In terms of assembly, homotetramer.

This Streptococcus pyogenes serotype M6 (strain ATCC BAA-946 / MGAS10394) protein is Single-stranded DNA-binding protein 1 (ssb1).